We begin with the raw amino-acid sequence, 156 residues long: Radiation-inducible immediate-early gene IEX-1 (156 aa).

Residues 1–62 (MCHSRSCHPT…SASRGHRKRS (62 aa)) form a disordered region. At 1–82 (MCHSRSCHPT…RQLPVEEPNP (82 aa)) the chain is on the cytoplasmic side. At Thr18 the chain carries Phosphothreonine; by MAPK1. Ser31 carries the phosphoserine modification. The segment covering 44 to 55 (PAAAPAGRPSAS) has biased composition (low complexity). A helical; Signal-anchor for type II membrane protein membrane pass occupies residues 83–99 (AKRLLFLLLTIVFCQIL). The Extracellular portion of the chain corresponds to 100 to 156 (MAEEGVPAPLPPEDAPNAASLAPTPVSAVLEPFNLTSEPSDYALDLSTFLQQHPAAF). The residue at position 123 (Thr123) is a Phosphothreonine; by MAPK1. Ser126 is subject to Phosphoserine; by MAPK1. A glycan (N-linked (GlcNAc...) asparagine) is linked at Asn133.

It belongs to the IER3 family. Interacts with the PPP2R5C-PP2A holoenzyme and ERK kinases; regulates ERK dephosphorylation. Phosphorylated at Thr-18, Thr-123 and Ser-126 by MAPK1/ERK2 and probably MAPK3/ERK1. Upon phosphorylation by MAPK1/ERK2 and MAPK3/ERK1, acquires the ability to inhibit cell death induced by various stimuli. Post-translationally, glycosylated.

The protein resides in the membrane. May play a role in the ERK signaling pathway by inhibiting the dephosphorylation of ERK by phosphatase PP2A-PPP2R5C holoenzyme. Also acts as an ERK downstream effector mediating survival. As a member of the NUPR1/RELB/IER3 survival pathway, may provide pancreatic ductal adenocarcinoma with remarkable resistance to cell stress, such as starvation or gemcitabine treatment. The polypeptide is Radiation-inducible immediate-early gene IEX-1 (IER3) (Homo sapiens (Human)).